The chain runs to 313 residues: Thiamine thiazole synthase (313 aa).

Residues A71, 92 to 93 (EA), G100, and V165 contribute to the substrate site. C199 is subject to 2,3-didehydroalanine (Cys). Residues D201, H216, M268, and 278–280 (RMG) each bind substrate.

Belongs to the THI4 family. As to quaternary structure, homooctamer. Fe cation serves as cofactor. In terms of processing, during the catalytic reaction, a sulfide is transferred from Cys-199 to a reaction intermediate, generating a dehydroalanine residue.

The protein localises to the cytoplasm. Its subcellular location is the nucleus. The catalysed reaction is [ADP-thiazole synthase]-L-cysteine + glycine + NAD(+) = [ADP-thiazole synthase]-dehydroalanine + ADP-5-ethyl-4-methylthiazole-2-carboxylate + nicotinamide + 3 H2O + 2 H(+). Its function is as follows. Involved in biosynthesis of the thiamine precursor thiazole. Catalyzes the conversion of NAD and glycine to adenosine diphosphate 5-(2-hydroxyethyl)-4-methylthiazole-2-carboxylic acid (ADT), an adenylated thiazole intermediate. The reaction includes an iron-dependent sulfide transfer from a conserved cysteine residue of the protein to a thiazole intermediate. The enzyme can only undergo a single turnover, which suggests it is a suicide enzyme. May have additional roles in adaptation to various stress conditions and in DNA damage tolerance. This Coprinopsis cinerea (strain Okayama-7 / 130 / ATCC MYA-4618 / FGSC 9003) (Inky cap fungus) protein is Thiamine thiazole synthase.